The sequence spans 142 residues: Galactose-binding lectin (142 aa).

In terms of domain architecture, Galectin spans 1–141 (TYAEVESFGV…GTDIWDLLLL (141 aa)).

Homotetramer.

Cytotoxic activity against L.infantum promastigotes is completely inhibited by D-galactose. Inhibition activity against biofilm formation by S.aureus and S.epidermidis is inhibited by alpha-lactose. Hemagglutination activity is inhibited by alpha-lactose (MIC=100 mM), beta-lactose (MIC=100 mM), lactulose (MIC=100 mM), bovine submaxillary mucin (BSM) (MIC=32 ug/ml), fetuin (MIC=16 ug/ml), porcine stomach mucin (PSM) type 2 (MIC=8 ug/ml) and PSM type 3 (MIC=8 ug/ml). In terms of biological role, galactose-binding lectin. Displays antibacterial and hemagglutinin activity. Inhibits the growth of L.infantum promastigotes by damaging their membrane integrity and inducing cell apoptosis via the production of reactive oxygen species (ROS). Inhibition of L.infantum promastigotes appears to increase with time (MIC=1.2 uM/ml after 24 hours, MIC=0.9 uM/ml after 48 hours and MIC=0.6 uM/ml after 72 hours). Agglutinates Gram-negative and Gram-positive bacteria including E.coli, S.aureus and S.epidermidis, and inhibits biofilm formation by S.aureus and S.epidermidis. Displays hemagglutination activity towards all types of human erythrocytes (O, A and B) and rabbit erythrocytes. The protein is Galactose-binding lectin of Chondrilla caribensis (Chicken liver sponge).